The following is a 32-amino-acid chain: Cytochrome b6-f complex subunit 7 (32 aa).

The helical transmembrane segment at 5–25 threads the bilayer; it reads IFTVAGVMWALVLTGLSVGFG.

It belongs to the PetM family. As to quaternary structure, the 4 large subunits of the cytochrome b6-f complex are cytochrome b6, subunit IV (17 kDa polypeptide, PetD), cytochrome f and the Rieske protein, while the 4 small subunits are PetG, PetL, PetM and PetN. The complex functions as a dimer.

The protein resides in the plastid. Its subcellular location is the chloroplast thylakoid membrane. Its function is as follows. Component of the cytochrome b6-f complex, which mediates electron transfer between photosystem II (PSII) and photosystem I (PSI), cyclic electron flow around PSI, and state transitions. The protein is Cytochrome b6-f complex subunit 7 of Emiliania huxleyi (Coccolithophore).